Reading from the N-terminus, the 336-residue chain is 3-isopropylmalate dehydrogenase (336 aa).

The substrate site is built by Arg87, Arg97, Arg121, and Asp211. The Mg(2+) site is built by Asp211, Asp235, and Asp239. 271–283 serves as a coordination point for NAD(+); that stretch reads GSAPDIAGQGIAD.

The protein belongs to the isocitrate and isopropylmalate dehydrogenases family. LeuB type 2 subfamily. Homodimer. Mg(2+) serves as cofactor. Mn(2+) is required as a cofactor.

Its subcellular location is the cytoplasm. The enzyme catalyses (2R,3S)-3-isopropylmalate + NAD(+) = 4-methyl-2-oxopentanoate + CO2 + NADH. It functions in the pathway amino-acid biosynthesis; L-leucine biosynthesis; L-leucine from 3-methyl-2-oxobutanoate: step 3/4. Catalyzes the oxidation of 3-carboxy-2-hydroxy-4-methylpentanoate (3-isopropylmalate) to 3-carboxy-4-methyl-2-oxopentanoate. The product decarboxylates to 4-methyl-2 oxopentanoate. In Mycobacterium bovis (strain ATCC BAA-935 / AF2122/97), this protein is 3-isopropylmalate dehydrogenase.